We begin with the raw amino-acid sequence, 474 residues long: tRNA-2-methylthio-N(6)-dimethylallyladenosine synthase (474 aa).

The MTTase N-terminal domain maps to 3–120; sequence KKLLIKTWGC…LPEMIKQSQT (118 aa). [4Fe-4S] cluster is bound by residues Cys12, Cys49, Cys83, Cys157, Cys161, and Cys164. Residues 143 to 375 enclose the Radical SAM core domain; sequence RAEGATAFVS…QQTINAQAMR (233 aa). One can recognise a TRAM domain in the interval 378–441; that stretch reads RLMLATEQRV…ANSLRGELVR (64 aa).

The protein belongs to the methylthiotransferase family. MiaB subfamily. As to quaternary structure, monomer. It depends on [4Fe-4S] cluster as a cofactor.

It is found in the cytoplasm. It carries out the reaction N(6)-dimethylallyladenosine(37) in tRNA + (sulfur carrier)-SH + AH2 + 2 S-adenosyl-L-methionine = 2-methylsulfanyl-N(6)-dimethylallyladenosine(37) in tRNA + (sulfur carrier)-H + 5'-deoxyadenosine + L-methionine + A + S-adenosyl-L-homocysteine + 2 H(+). Its function is as follows. Catalyzes the methylthiolation of N6-(dimethylallyl)adenosine (i(6)A), leading to the formation of 2-methylthio-N6-(dimethylallyl)adenosine (ms(2)i(6)A) at position 37 in tRNAs that read codons beginning with uridine. The protein is tRNA-2-methylthio-N(6)-dimethylallyladenosine synthase of Vibrio parahaemolyticus serotype O3:K6 (strain RIMD 2210633).